The primary structure comprises 255 residues: Ras-like protein family member 12 (255 aa).

Residues glycine 30–serine 37, aspartate 77–glutamine 81, and asparagine 137–aspartate 140 each bind GTP.

Belongs to the small GTPase superfamily. Ras family.

The catalysed reaction is GTP + H2O = GDP + phosphate + H(+). In Danio rerio (Zebrafish), this protein is Ras-like protein family member 12 (RASL12).